The chain runs to 96 residues: MNIRPLHDRVVVRRKEEEEKSAGGIVLPGSAKEKPNQGEVVAVGSGRVLDNGETRPVDVKVGDTVVFGKYAGSDTIEINGEELVILSESDIKAIIE.

It belongs to the GroES chaperonin family. As to quaternary structure, heptamer of 7 subunits arranged in a ring. Interacts with the chaperonin GroEL.

The protein resides in the cytoplasm. In terms of biological role, together with the chaperonin GroEL, plays an essential role in assisting protein folding. The GroEL-GroES system forms a nano-cage that allows encapsulation of the non-native substrate proteins and provides a physical environment optimized to promote and accelerate protein folding. GroES binds to the apical surface of the GroEL ring, thereby capping the opening of the GroEL channel. In Teredinibacter turnerae (strain ATCC 39867 / T7901), this protein is Co-chaperonin GroES.